The chain runs to 273 residues: WIMGHMVNAIAQIDEFVNLGANSIETDVSFDSSANPEYTYHGVPCDCGRTCTKWEHFNEFLKGLRKATTPGDSKYHEKLVLVVFDLKTGSLYDNQASDAGKKLAKSLLQNYWNNGNNGGRAYIVLSIPNLAHYKLITGFKEALTSEGHPELMDKVGYDFSGNDDIGDVANAYKKAGVTGHVWQSDGITNCLLRGLDRVRKAVANRDSSNGYINKVYYWTVDKRQSTRDALDAGVDGIMTNYPDVIADVLNESAYKAKFRIASYDDNPWETFKN.

Histidine 5 is an active-site residue. Residues glutamate 25 and aspartate 27 each contribute to the Mg(2+) site. Histidine 41 acts as the Nucleophile in catalysis. Disulfide bonds link cysteine 45–cysteine 51 and cysteine 47–cysteine 190. Aspartate 85 is a binding site for Mg(2+). Asparagine 250 carries an N-linked (GlcNAc...) asparagine glycan.

The protein belongs to the arthropod phospholipase D family. Class II subfamily. Mg(2+) serves as cofactor. In terms of tissue distribution, expressed by the venom gland.

The protein localises to the secreted. It catalyses the reaction an N-(acyl)-sphingosylphosphocholine = an N-(acyl)-sphingosyl-1,3-cyclic phosphate + choline. The enzyme catalyses an N-(acyl)-sphingosylphosphoethanolamine = an N-(acyl)-sphingosyl-1,3-cyclic phosphate + ethanolamine. The catalysed reaction is a 1-acyl-sn-glycero-3-phosphocholine = a 1-acyl-sn-glycero-2,3-cyclic phosphate + choline. It carries out the reaction a 1-acyl-sn-glycero-3-phosphoethanolamine = a 1-acyl-sn-glycero-2,3-cyclic phosphate + ethanolamine. Dermonecrotic toxins cleave the phosphodiester linkage between the phosphate and headgroup of certain phospholipids (sphingolipid and lysolipid substrates), forming an alcohol (often choline) and a cyclic phosphate. This toxin acts on sphingomyelin (SM). It may also act on ceramide phosphoethanolamine (CPE), lysophosphatidylcholine (LPC) and lysophosphatidylethanolamine (LPE), but not on lysophosphatidylserine (LPS), and lysophosphatidylglycerol (LPG). It acts by transphosphatidylation, releasing exclusively cyclic phosphate products as second products. Induces dermonecrosis, hemolysis, increased vascular permeability, edema, inflammatory response, and platelet aggregation. The polypeptide is Dermonecrotic toxin LapSicTox-alphaIB1c (Loxosceles apachea (Apache recluse spider)).